Consider the following 317-residue polypeptide: Probable GTP 3',8-cyclase (317 aa).

Positions 4–223 (RYGRPLEDLR…KSEIREKHFR (220 aa)) constitute a Radical SAM core domain. Arg13 is a GTP binding site. 3 residues coordinate [4Fe-4S] cluster: Cys20, Cys24, and Cys27. Lys61 provides a ligand contact to GTP. S-adenosyl-L-methionine is bound at residue Gly65. Thr91 provides a ligand contact to GTP. An S-adenosyl-L-methionine-binding site is contributed by Ser115. GTP is bound at residue Lys152. [4Fe-4S] cluster is bound by residues Cys246 and Cys249. Position 251–253 (251–253 (RVR)) interacts with GTP. Cys263 provides a ligand contact to [4Fe-4S] cluster.

The protein belongs to the radical SAM superfamily. MoaA family. It depends on [4Fe-4S] cluster as a cofactor.

The enzyme catalyses GTP + AH2 + S-adenosyl-L-methionine = (8S)-3',8-cyclo-7,8-dihydroguanosine 5'-triphosphate + 5'-deoxyadenosine + L-methionine + A + H(+). Its pathway is cofactor biosynthesis; molybdopterin biosynthesis. Functionally, catalyzes the cyclization of GTP to (8S)-3',8-cyclo-7,8-dihydroguanosine 5'-triphosphate. The polypeptide is Probable GTP 3',8-cyclase (Metallosphaera sedula (strain ATCC 51363 / DSM 5348 / JCM 9185 / NBRC 15509 / TH2)).